Reading from the N-terminus, the 158-residue chain is NAD(P)H-quinone oxidoreductase subunit N (158 aa).

Belongs to the complex I NdhN subunit family. In terms of assembly, NDH-1 can be composed of about 15 different subunits; different subcomplexes with different compositions have been identified which probably have different functions.

It localises to the cellular thylakoid membrane. The enzyme catalyses a plastoquinone + NADH + (n+1) H(+)(in) = a plastoquinol + NAD(+) + n H(+)(out). The catalysed reaction is a plastoquinone + NADPH + (n+1) H(+)(in) = a plastoquinol + NADP(+) + n H(+)(out). Functionally, NDH-1 shuttles electrons from an unknown electron donor, via FMN and iron-sulfur (Fe-S) centers, to quinones in the respiratory and/or the photosynthetic chain. The immediate electron acceptor for the enzyme in this species is believed to be plastoquinone. Couples the redox reaction to proton translocation, and thus conserves the redox energy in a proton gradient. Cyanobacterial NDH-1 also plays a role in inorganic carbon-concentration. This Rippkaea orientalis (strain PCC 8801 / RF-1) (Cyanothece sp. (strain PCC 8801)) protein is NAD(P)H-quinone oxidoreductase subunit N.